The chain runs to 931 residues: Envelope glycoprotein B (931 aa).

The first 71 residues, 1-71, serve as a signal peptide directing secretion; it reads MSPCGYYSKW…FSMFVTAVVS (71 aa). Over 72-786 the chain is Virion surface; the sequence is VSPSSFYESL…HGFTTFLSNP (715 aa). 5 cysteine pairs are disulfide-bonded: C122/C584, C139/C540, C213/C277, C369/C417, and C608/C645. N147 carries an N-linked (GlcNAc...) asparagine; by host glycan. Residues 179-185 form an involved in fusion and/or binding to host membrane region; sequence AWAGSSY. N-linked (GlcNAc...) asparagine; by host glycosylation occurs at N257. The tract at residues 264 to 271 is involved in fusion and/or binding to host membrane; it reads GTPGTYRT. 4 N-linked (GlcNAc...) asparagine; by host glycosylation sites follow: N435, N503, N620, and N686. Hydrophobic membrane proximal region stretches follow at residues 731–784 and 764–784; these read IDKV…TFLS and VVLG…TFLS. A helical membrane pass occupies residues 787–807; the sequence is FGALAVGLLVLAGLVAAFFAY. Residues 808–931 lie on the Intravirion side of the membrane; sequence RYVLKLKTSP…RVRTENVTGV (124 aa). Residues 881–884 carry the Golgi targeting motif; sequence YMTL. Positions 920–923 match the Internalization motif motif; it reads YSRV.

It belongs to the herpesviridae glycoprotein B family. In terms of assembly, homotrimer; disulfide-linked. Binds to heparan sulfate proteoglycans. Interacts with gH/gL heterodimer. In terms of processing, a proteolytic cleavage by host furin generates two subunits that remain linked by disulfide bonds.

The protein localises to the virion membrane. The protein resides in the host cell membrane. It localises to the host endosome membrane. Its subcellular location is the host Golgi apparatus membrane. Envelope glycoprotein that forms spikes at the surface of virion envelope. Essential for the initial attachment to heparan sulfate moieties of the host cell surface proteoglycans. Involved in fusion of viral and cellular membranes leading to virus entry into the host cell. Following initial binding to its host receptors, membrane fusion is mediated by the fusion machinery composed at least of gB and the heterodimer gH/gL. May be involved in the fusion between the virion envelope and the outer nuclear membrane during virion egress. This is Envelope glycoprotein B from Varicella-zoster virus (strain Oka vaccine) (HHV-3).